The chain runs to 115 residues: Large ribosomal subunit protein bL19 (115 aa).

Belongs to the bacterial ribosomal protein bL19 family.

Functionally, this protein is located at the 30S-50S ribosomal subunit interface and may play a role in the structure and function of the aminoacyl-tRNA binding site. This chain is Large ribosomal subunit protein bL19, found in Koribacter versatilis (strain Ellin345).